A 184-amino-acid chain; its full sequence is Putative manganese efflux pump MntP (184 aa).

The next 5 membrane-spanning stretches (helical) occupy residues 39-59 (IFGVFQALMPFLGYILGLSFV), 65-85 (IDHFIAFGILGFLGAKMILEA), 102-122 (LALGAVATSIDALAVGITFSF), 132-152 (LIIGTVCFVLCTAACYVGKIL), and 161-181 (LVLGGLILIGLGTKILITHLV).

Belongs to the MntP (TC 9.B.29) family.

Its subcellular location is the cell inner membrane. Probably functions as a manganese efflux pump. The chain is Putative manganese efflux pump MntP from Campylobacter curvus (strain 525.92).